We begin with the raw amino-acid sequence, 431 residues long: Serine/threonine-protein kinase Sgk1 (431 aa).

A disordered region spans residues 58 to 93 (LNLTPPQDPELMNSNPSPPPSPSQQINLGPSSNPSA). Positions 81–93 (QQINLGPSSNPSA) are enriched in polar residues. The Protein kinase domain occupies 98–355 (FHFLKVIGKG…FTEIKNHVFF (258 aa)). ATP-binding positions include 104 to 112 (IGKGSFGKV) and lysine 127. Catalysis depends on aspartate 222, which acts as the Proton acceptor. In terms of domain architecture, AGC-kinase C-terminal spans 356–431 (SPINWDDLNA…SYAPSMDSYL (76 aa)).

The protein belongs to the protein kinase superfamily. AGC Ser/Thr protein kinase family.

It localises to the cytoplasm. Its subcellular location is the nucleus. It is found in the endoplasmic reticulum. It catalyses the reaction L-seryl-[protein] + ATP = O-phospho-L-seryl-[protein] + ADP + H(+). The enzyme catalyses L-threonyl-[protein] + ATP = O-phospho-L-threonyl-[protein] + ADP + H(+). Functionally, protein kinase that may play an important role in cellular stress response. May be involved in the regulation of processes such as cell survival, neuronal excitability and renal sodium excretion. This Fundulus heteroclitus (Killifish) protein is Serine/threonine-protein kinase Sgk1 (sgk1).